Here is a 263-residue protein sequence, read N- to C-terminus: Acyl-[acyl-carrier-protein]--UDP-N-acetylglucosamine O-acyltransferase (263 aa).

The protein belongs to the transferase hexapeptide repeat family. LpxA subfamily. Homotrimer.

It is found in the cytoplasm. It carries out the reaction a (3R)-hydroxyacyl-[ACP] + UDP-N-acetyl-alpha-D-glucosamine = a UDP-3-O-[(3R)-3-hydroxyacyl]-N-acetyl-alpha-D-glucosamine + holo-[ACP]. It participates in glycolipid biosynthesis; lipid IV(A) biosynthesis; lipid IV(A) from (3R)-3-hydroxytetradecanoyl-[acyl-carrier-protein] and UDP-N-acetyl-alpha-D-glucosamine: step 1/6. In terms of biological role, involved in the biosynthesis of lipid A, a phosphorylated glycolipid that anchors the lipopolysaccharide to the outer membrane of the cell. The chain is Acyl-[acyl-carrier-protein]--UDP-N-acetylglucosamine O-acyltransferase from Stenotrophomonas maltophilia (strain R551-3).